The sequence spans 229 residues: Non-structural protein P8 (229 aa).

Residues 14–26 (MKHNQDRVEELSL) are CCM-I. Residues 94–116 (IKRHVNEQILPKLKSDLSELKKK) form a CCM-III region. The next 2 helical transmembrane spans lie at 119 to 139 (IIHT…VCTL) and 162 to 182 (SLNP…MVCA). The segment at 185-198 (ERALNQQIDMIKKE) is CCM-II.

It belongs to the orbivirus NS3 family. In terms of assembly, forms homooligomers via coiled-coil motif. Interacts with host OPTN; this interaction inhibits innate immune response.

It localises to the host cell membrane. It is found in the host Golgi apparatus. Plays a role in the inhibition of host innate immune response. Interacts with host OPTN and thus inhibits the recruitment of TBK1 to the host Golgi apparatus. In turn, downstream partner IRF3 cannot be activated and IFN-beta production is impaired. In terms of biological role, facilitates viral particle release either by increasing plasma membrane permeability through a viroporin-like activity or by viral budding. The protein is Non-structural protein P8 (Segment-10) of Bluetongue virus 10 (isolate USA) (BTV 10).